The sequence spans 453 residues: Pup--protein ligase (453 aa).

Glu9 is a binding site for Mg(2+). Arg53 contacts ATP. Tyr55 serves as a coordination point for Mg(2+). Asp57 serves as the catalytic Proton acceptor. Glu63 contributes to the Mg(2+) binding site. Positions 66 and 420 each coordinate ATP.

This sequence belongs to the Pup ligase/Pup deamidase family. Pup-conjugating enzyme subfamily.

The enzyme catalyses ATP + [prokaryotic ubiquitin-like protein]-L-glutamate + [protein]-L-lysine = ADP + phosphate + N(6)-([prokaryotic ubiquitin-like protein]-gamma-L-glutamyl)-[protein]-L-lysine.. It functions in the pathway protein degradation; proteasomal Pup-dependent pathway. It participates in protein modification; protein pupylation. Functionally, catalyzes the covalent attachment of the prokaryotic ubiquitin-like protein modifier Pup to the proteasomal substrate proteins, thereby targeting them for proteasomal degradation. This tagging system is termed pupylation. The ligation reaction involves the side-chain carboxylate of the C-terminal glutamate of Pup and the side-chain amino group of a substrate lysine. In Nocardioides sp. (strain ATCC BAA-499 / JS614), this protein is Pup--protein ligase.